The chain runs to 664 residues: MSMSCKINWLMVLVIIALSNLESSLGRLVFEGSAGLMNGFTTLTNTKKHAYGQAFNDEPFPFKNSVNGNMTSFSFTFFFAIVPEHIDKGSHGIAFVISPTRGIPGASADQYLGIFNDTNDGNSSNHIIAVELDIHKDDEFGDIDDNHVGININGMRSIVSAPAGYYDQNGQFKNLSLISGNLLRVTILYSQEEKQLNVTLSPAEEANVPKWPLLSLNKDLSPYLSKNMYIGFTASTGSVGAIHYMWMWYVFTFIIVPKLDFDIPTFPPYPKAESQVKLIVLVTFLTLALFVALAASALIVFFYKRHKKLLEVLEEWEVECGPHRFSYKELFNATNGFKQLLGEGGFGPVFKGTLSGSNAKIAVKRVSHDSSQGMRELLAEISTIGRLRHPNLVRLLGYCRYKEELYLVYDFLPNGSLDKYLYGTSDQKQLSWSQRFKIIKDVASALSYLHHGWIHVVIHRDIKPANVLIDDKMNASLGDFGLAKVYDQGYDPQTSRVAGTFGYMAPEIMRTGRPTMGTDVYAFGMFMLEVSCDRKLFEPRAESEEAILTNWAINCWENGDIVEAATERIRQDNDKGQLELVLKLGVLCSHEAEEVRPDMATVVKILNGVSELPDNLLDIVRSEKLENWYERYSKVIDPVTTEESIGNLAITEPILPSGRPRLFL.

A signal peptide spans 1 to 26; that stretch reads MSMSCKINWLMVLVIIALSNLESSLG. Residues 27 to 278 lie on the Extracellular side of the membrane; the sequence is RLVFEGSAGL…YPKAESQVKL (252 aa). The legume-lectin like stretch occupies residues 28 to 250; sequence LVFEGSAGLM…AIHYMWMWYV (223 aa). 5 N-linked (GlcNAc...) asparagine glycosylation sites follow: Asn69, Asn116, Asn122, Asn174, and Asn197. The helical transmembrane segment at 279–299 threads the bilayer; that stretch reads IVLVTFLTLALFVALAASALI. Over 300–664 the chain is Cytoplasmic; the sequence is VFFYKRHKKL…LPSGRPRLFL (365 aa). Residues 335 to 617 enclose the Protein kinase domain; that stretch reads NGFKQLLGEG…GVSELPDNLL (283 aa). Residues 341-349 and Lys364 each bind ATP; that span reads LGEGGFGPV. Asp461 functions as the Proton acceptor in the catalytic mechanism.

It in the C-terminal section; belongs to the protein kinase superfamily. Ser/Thr protein kinase family. The protein in the N-terminal section; belongs to the leguminous lectin family.

The protein resides in the cell membrane. The enzyme catalyses L-seryl-[protein] + ATP = O-phospho-L-seryl-[protein] + ADP + H(+). The catalysed reaction is L-threonyl-[protein] + ATP = O-phospho-L-threonyl-[protein] + ADP + H(+). The polypeptide is Probable L-type lectin-domain containing receptor kinase V.3 (LECRK53) (Arabidopsis thaliana (Mouse-ear cress)).